Consider the following 81-residue polypeptide: Cytochrome b559 subunit alpha (81 aa).

A helical transmembrane segment spans residues 21–35 (VIHSITIPMLFIAGW). Histidine 23 lines the heme pocket.

The protein belongs to the PsbE/PsbF family. As to quaternary structure, heterodimer of an alpha subunit and a beta subunit. PSII is composed of 1 copy each of membrane proteins PsbA, PsbB, PsbC, PsbD, PsbE, PsbF, PsbH, PsbI, PsbJ, PsbK, PsbL, PsbM, PsbT, PsbX, PsbY, PsbZ, Psb30/Ycf12, peripheral proteins PsbO, CyanoQ (PsbQ), PsbU, PsbV and a large number of cofactors. It forms dimeric complexes. Requires heme b as cofactor.

Its subcellular location is the cellular thylakoid membrane. This b-type cytochrome is tightly associated with the reaction center of photosystem II (PSII). PSII is a light-driven water:plastoquinone oxidoreductase that uses light energy to abstract electrons from H(2)O, generating O(2) and a proton gradient subsequently used for ATP formation. It consists of a core antenna complex that captures photons, and an electron transfer chain that converts photonic excitation into a charge separation. This Picosynechococcus sp. (strain ATCC 27264 / PCC 7002 / PR-6) (Agmenellum quadruplicatum) protein is Cytochrome b559 subunit alpha.